Reading from the N-terminus, the 113-residue chain is Dolichyl-diphosphooligosaccharide--protein glycosyltransferase subunit dad-1 (113 aa).

Residues 1 to 32 (MAAQVVPVLSKLFDDYQKTTSSKLKIIDAYMT) lie on the Cytoplasmic side of the membrane. A helical membrane pass occupies residues 33-53 (YILFTGIFQFIYCLLVGTFPF). Topologically, residues 54–55 (NS) are lumenal. A helical membrane pass occupies residues 56–78 (FLSGFISTVTSFVLASCLRMQVN). Residues 79-92 (QENRSEFTAVSTER) are Cytoplasmic-facing. A helical membrane pass occupies residues 93–113 (AFADFIFANLILHLVVVNFLG).

It belongs to the DAD/OST2 family. Component of the oligosaccharyltransferase (OST) complex.

Its subcellular location is the endoplasmic reticulum membrane. It functions in the pathway protein modification; protein glycosylation. Its function is as follows. Subunit of the oligosaccharyl transferase (OST) complex that catalyzes the initial transfer of a defined glycan (Glc(3)Man(9)GlcNAc(2) in eukaryotes) from the lipid carrier dolichol-pyrophosphate to an asparagine residue within an Asn-X-Ser/Thr consensus motif in nascent polypeptide chains, the first step in protein N-glycosylation. N-glycosylation occurs cotranslationally and the complex associates with the Sec61 complex at the channel-forming translocon complex that mediates protein translocation across the endoplasmic reticulum (ER). All subunits are required for a maximal enzyme activity. Possesses cell death-inhibiting activity. Suppresses some programmed cell death in C.elegans. The chain is Dolichyl-diphosphooligosaccharide--protein glycosyltransferase subunit dad-1 from Caenorhabditis elegans.